Reading from the N-terminus, the 536-residue chain is Lysosomal acid glucosylceramidase (536 aa).

The N-terminal stretch at 1-39 is a signal peptide; that stretch reads MEFSSPSREECPKPLSRVSIMAGSLTGLLLLQAVSWASG. 2 disulfide bridges follow: cysteine 43/cysteine 55 and cysteine 57/cysteine 62. Asparagine 58, asparagine 98, and asparagine 185 each carry an N-linked (GlcNAc...) asparagine glycan. Glutamate 274 acts as the Proton donor in catalysis. The N-linked (GlcNAc...) asparagine glycan is linked to asparagine 309. The active-site Nucleophile is the glutamate 379. Asparagine 501 carries N-linked (GlcNAc...) asparagine glycosylation.

Belongs to the glycosyl hydrolase 30 family. In terms of assembly, interacts with saposin-C. Interacts with SCARB2. Interacts with TCP1. May interacts with SNCA; this interaction may inhibit the glucosylceramidase activity. Interacts with GRN; this interaction prevents aggregation of GBA1-SCARB2 complex via interaction with HSPA1A upon stress.

It localises to the lysosome membrane. It catalyses the reaction a beta-D-glucosyl-(1&lt;-&gt;1')-N-acylsphing-4-enine + H2O = an N-acylsphing-4-enine + D-glucose. It carries out the reaction a beta-D-galactosyl-(1&lt;-&gt;1')-N-acylsphing-4-enine + H2O = an N-acylsphing-4-enine + D-galactose. The enzyme catalyses cholesteryl 3-beta-D-glucoside + H2O = cholesterol + D-glucose. The catalysed reaction is a beta-D-glucosyl-(1&lt;-&gt;1')-N-acylsphing-4-enine + cholesterol = cholesteryl 3-beta-D-glucoside + an N-acylsphing-4-enine. It catalyses the reaction beta-D-glucosyl-N-(9Z-octadecenoyl)-sphing-4E-enine + cholesterol = N-(9Z-octadecenoyl)-sphing-4-enine + cholesteryl 3-beta-D-glucoside. It carries out the reaction beta-D-glucosyl-(1&lt;-&gt;1')-N-hexadecanoylsphing-4-enine + cholesterol = cholesteryl 3-beta-D-glucoside + N-hexadecanoylsphing-4-enine. The enzyme catalyses beta-D-glucosyl-N-octanoylsphing-4E-enine + cholesterol = N-octanoylsphing-4-enine + cholesteryl 3-beta-D-glucoside. The catalysed reaction is beta-D-glucosyl-N-dodecanoylsphing-4-enine + cholesterol = N-dodecanoylsphing-4-enine + cholesteryl 3-beta-D-glucoside. It catalyses the reaction beta-D-glucosyl-(1&lt;-&gt;1)-N-octadecanoylsphing-4-enine + cholesterol = N-octadecanoylsphing-4-enine + cholesteryl 3-beta-D-glucoside. It carries out the reaction beta-D-glucosyl-(1&lt;-&gt;1')-N-(15Z-tetracosenoyl)-sphing-4-enine + cholesterol = N-(15Z-tetracosenoyl)-sphing-4-enine + cholesteryl 3-beta-D-glucoside. The enzyme catalyses a beta-D-galactosyl-(1&lt;-&gt;1')-N-acylsphing-4-enine + cholesterol = cholesteryl 3-beta-D-galactoside + an N-acylsphing-4-enine. The catalysed reaction is 1-(beta-D-galactosyl)-N-dodecanoylsphing-4-enine + cholesterol = cholesteryl 3-beta-D-galactoside + N-dodecanoylsphing-4-enine. It catalyses the reaction a beta-D-xylosyl-(1&lt;-&gt;1')-N-acylsphing-4-enine + cholesterol = cholesteryl 3-beta-D-xyloside + an N-acylsphing-4-enine. It carries out the reaction beta-D-xylosyl-(1&lt;-&gt;1')-N-(9Z-octadecenoyl)-sphing-4-enine + cholesterol = cholesteryl 3-beta-D-xyloside + N-(9Z-octadecenoyl)-sphing-4-enine. Its pathway is steroid metabolism; cholesterol metabolism. It functions in the pathway sphingolipid metabolism. Its activity is regulated as follows. Synergistically activated by saposin-A and saposin-C, two saposin peptides produced by proteolytic processing of prosaposin/PSAP. Saposin-C activates GBA1 through its recruitment to membranes. The membrane structure and composition in anionic phospholipids are also important for the activation. Activated by PKC in the salvage pathway of ceramide formation. Inhibited by conduritol B epoxide/CBE. In terms of biological role, glucosylceramidase that catalyzes, within the lysosomal compartment, the hydrolysis of glucosylceramides/GlcCers (such as beta-D-glucosyl-(1&lt;-&gt;1')-N-acylsphing-4-enine) into free ceramides (such as N-acylsphing-4-enine) and glucose. Plays a central role in the degradation of complex lipids and the turnover of cellular membranes. Through the production of ceramides, participates in the PKC-activated salvage pathway of ceramide formation. Catalyzes the glucosylation of cholesterol, through a transglucosylation reaction where glucose is transferred from GlcCer to cholesterol. GlcCer containing mono-unsaturated fatty acids (such as beta-D-glucosyl-N-(9Z-octadecenoyl)-sphing-4-enine) are preferred as glucose donors for cholesterol glucosylation when compared with GlcCer containing same chain length of saturated fatty acids (such as beta-D-glucosyl-N-octadecanoyl-sphing-4-enine). Under specific conditions, may alternatively catalyze the reverse reaction, transferring glucose from cholesteryl 3-beta-D-glucoside to ceramide. Can also hydrolyze cholesteryl 3-beta-D-glucoside producing glucose and cholesterol. Catalyzes the hydrolysis of galactosylceramides/GalCers (such as beta-D-galactosyl-(1&lt;-&gt;1')-N-acylsphing-4-enine), as well as the transfer of galactose between GalCers and cholesterol in vitro, but with lower activity than with GlcCers. Contrary to GlcCer and GalCer, xylosylceramide/XylCer (such as beta-D-xyosyl-(1&lt;-&gt;1')-N-acylsphing-4-enine) is not a good substrate for hydrolysis, however it is a good xylose donor for transxylosylation activity to form cholesteryl 3-beta-D-xyloside. This Homo sapiens (Human) protein is Lysosomal acid glucosylceramidase.